Consider the following 363-residue polypeptide: D(1) dopamine receptor (363 aa).

The Extracellular segment spans residues 1 to 24 (MAVLDLNLTTVIDSGFMESDRSVR). N7 is a glycosylation site (N-linked (GlcNAc...) asparagine). Residues 25–45 (VLTGCFLSVLILSTLLGNTLV) traverse the membrane as a helical segment. Residues 46–61 (CAAVTKFRHLRSKVTN) lie on the Cytoplasmic side of the membrane. Residues 62 to 81 (FFVISLAVSDLLVAVLVMPW) traverse the membrane as a helical segment. The Extracellular portion of the chain corresponds to 82-98 (KAVTEVAGFWPFGAFCD). A disulfide bond links C97 and C187. A helical membrane pass occupies residues 99–120 (IWVAFDIMCSTASILNLCVISV). The Cytoplasmic portion of the chain corresponds to 121–139 (DRYWAISSPFRYERKMTPR). The helical transmembrane segment at 140–164 (VAFVMISGAWTLSVLISFIPVQLKW) threads the bilayer. The Extracellular portion of the chain corresponds to 165–194 (HKAQPIGFLEVNASRRDLPTDNCDSSLNRT). The helical transmembrane segment at 195–219 (YAISSSLISFYIPVAIMIVTYTQIY) threads the bilayer. At 220-271 (RIAQKQIRRISALERAAESAQIRHDSMGSGSNMDLESSFKLSFKRETKVLKT) the chain is on the cytoplasmic side. A helical membrane pass occupies residues 272–297 (LSVIMGVFVCCWLPFFILNCMVPFCK). The Extracellular segment spans residues 298-310 (RTSNGLPCISPTT). Residues 311-330 (FDVFVWFGWANSSLNPIIYA) form a helical membrane-spanning segment. At 331–363 (FNADFRRAFAILLGCQRLCPGSISMETPSLNKN) the chain is on the cytoplasmic side. Residue C345 is the site of S-palmitoyl cysteine attachment.

It belongs to the G-protein coupled receptor 1 family. As to expression, retina.

The protein localises to the cell membrane. The protein resides in the cell projection. It is found in the cilium membrane. Dopamine receptor whose activity is mediated by G proteins which activate adenylyl cyclase. Could be involved in growth hormone release. This Carassius auratus (Goldfish) protein is D(1) dopamine receptor.